Reading from the N-terminus, the 483-residue chain is GTPase Der (483 aa).

EngA-type G domains lie at 3–167 and 212–387; these read FTLA…GEER and LRIA…EIWN. GTP is bound by residues 9-16, 56-60, 119-122, 218-225, 265-269, and 330-333; these read GRPNVGKS, DTAGL, NKAE, GRPNAGKS, DTAGM, and NKWD. The KH-like domain occupies 388–472; the sequence is RRISTGRLNR…PIRLSLRTSD (85 aa).

It belongs to the TRAFAC class TrmE-Era-EngA-EngB-Septin-like GTPase superfamily. EngA (Der) GTPase family. Associates with the 50S ribosomal subunit.

GTPase that plays an essential role in the late steps of ribosome biogenesis. In Brucella suis (strain ATCC 23445 / NCTC 10510), this protein is GTPase Der.